A 283-amino-acid polypeptide reads, in one-letter code: Phospholipase C (283 aa).

The N-terminal stretch at 1 to 24 (MKKKVLALGAAITLVAPLQSVAFA) is a signal peptide. A propeptide spanning residues 25 to 38 (HENDGGQRFGVIPR) is cleaved from the precursor. Zn(2+)-binding residues include W39, H52, D93, H107, H156, D160, H166, H180, and E184. In terms of domain architecture, Zn-dependent PLC spans 39 to 283 (WSAEDKHKEG…QLWFDTYGNR (245 aa)).

It belongs to the bacterial zinc-metallophospholipase C family. In terms of assembly, monomer. Requires Zn(2+) as cofactor.

The enzyme catalyses a 1,2-diacyl-sn-glycero-3-phosphocholine + H2O = phosphocholine + a 1,2-diacyl-sn-glycerol + H(+). In terms of biological role, required, with sphingomyelinase, to effect target cell lysis (hemolysis). In Bacillus cereus, this protein is Phospholipase C (cerA).